Reading from the N-terminus, the 793-residue chain is Protein translocase subunit SecA 2 (793 aa).

ATP is bound by residues Gln77, 95-99 (GEGKT), and Asp493.

Belongs to the SecA family. Monomer and homodimer (Potential). Part of the accessory SecA2/SecY2 protein translocation apparatus required to export cell wall protein GspB.

It is found in the cell membrane. Its subcellular location is the cytoplasm. It carries out the reaction ATP + H2O + cellular proteinSide 1 = ADP + phosphate + cellular proteinSide 2.. Functionally, part of the accessory SecA2/SecY2 system specifically required to export GspB, a serine-rich repeat cell wall protein encoded upstream in the same operon. This is Protein translocase subunit SecA 2 from Streptococcus gordonii.